The chain runs to 213 residues: Histone H1.1 (213 aa).

The disordered stretch occupies residues 1 to 43 (MSETAPVAQAASTATEKPAAAKKTKKPAKAAAPRKKPAGPSVS). Residue Ser2 is modified to N-acetylserine. Phosphoserine is present on residues Ser2 and Ser12. Positions 8–18 (AQAASTATEKP) are enriched in low complexity. Lys17 carries the N6-acetyllysine modification. Positions 20–37 (AAKKTKKPAKAAAPRKKP) are enriched in basic residues. Lys36 is subject to N6-(beta-hydroxybutyryl)lysine. In terms of domain architecture, H15 spans 38-111 (AGPSVSELIV…GAAGSFKLNK (74 aa)). Ser43 bears the Phosphoserine mark. Lys54 bears the N6-(beta-hydroxybutyryl)lysine mark. Arg56 carries the post-translational modification Citrulline. Lys66 is modified (N6-(beta-hydroxybutyryl)lysine). Ser67 is subject to Phosphoserine. An N6-acetyllysine modification is found at Lys77. The residue at position 87 (Lys87) is an N6-(beta-hydroxybutyryl)lysine. Position 92 is an N6-(beta-hydroxybutyryl)lysine; alternate (Lys92). Lys92 bears the N6-acetyllysine; alternate mark. Position 106 is a phosphoserine (Ser106). Lys108 bears the N6-(beta-hydroxybutyryl)lysine mark. Residues 112–213 (KAESKAITTK…KPKKAAPKKK (102 aa)) are disordered. A compositionally biased stretch (low complexity) spans 120–144 (TKVSVKAKASGAAKKPKKTAGAAAK). Lys121 is subject to N6-acetyllysine. Composition is skewed to basic residues over residues 145 to 178 (KTVK…KKVA) and 185 to 213 (KAVK…PKKK). Residue Thr201 is modified to Phosphothreonine.

Belongs to the histone H1/H5 family. In terms of assembly, interacts with DFFB. Post-translationally, H1 histones are progressively phosphorylated during the cell cycle, becoming maximally phosphorylated during late G2 phase and M phase, and being dephosphorylated sharply thereafter. Citrullination at Arg-56 (H1R54ci) by PADI4 takes place within the DNA-binding site of H1 and results in its displacement from chromatin and global chromatin decondensation, thereby promoting pluripotency and stem cell maintenance. In terms of processing, hydroxybutyrylation of histones is induced by starvation. In terms of tissue distribution, restricted to thymus, testis and spleen. Present also in lymphocytic and neuronal cells. Increases in testis starting with a low level at day 5 and reaching high concentrations in 20-day old and adult animals.

The protein localises to the nucleus. It localises to the chromosome. Functionally, histone H1 protein binds to linker DNA between nucleosomes forming the macromolecular structure known as the chromatin fiber. Histones H1 are necessary for the condensation of nucleosome chains into higher-order structured fibers. Also acts as a regulator of individual gene transcription through chromatin remodeling, nucleosome spacing and DNA methylation. The chain is Histone H1.1 from Mus musculus (Mouse).